Consider the following 223-residue polypeptide: Translation initiation factor 6 (223 aa).

The protein belongs to the eIF-6 family. In terms of assembly, associates with the 50S ribosomal subunit, specifically with protein L14. Binds to 23S rRNA, possibly between where the 30S and 50S subunits associate to initiate translation. Post-translationally, modified in an unknown fashion (not phosphorylation) following release from 50S ribosomal subunits.

Its function is as follows. Binds to the 50S ribosomal subunit and prevents its association with the 30S ribosomal subunit to form the 70S initiation complex. Inhibits translation of both leadered and leaderless mRNAs, maybe by binding to the 50S ribosome subunit, preventing it from binding to the 30S subunit. This Saccharolobus solfataricus (strain ATCC 35092 / DSM 1617 / JCM 11322 / P2) (Sulfolobus solfataricus) protein is Translation initiation factor 6.